An 847-amino-acid polypeptide reads, in one-letter code: Protein IRS1 (847 aa).

Disordered regions lie at residues 1 to 82 (MAQR…NFWH), 607 to 627 (WLMEQPPPPSRQTKPDAATMP), and 715 to 847 (QVIP…HVHH). Gly residues predominate over residues 16-25 (RGRGAGGPSG). The segment covering 26 to 56 (VGSSPPSSCVPMGATSTAGTGASAAPTATPG) has biased composition (low complexity). Acidic residues predominate over residues 723-733 (EPEDDDEDPTY). Residues 833 to 847 (RPKKCQTHAPHHVHH) show a composition bias toward basic residues.

The protein belongs to the herpesviridae US22 family. As to quaternary structure, interacts (via N-terminus) with the viral DNA polymerase accessory subunit UL44. Interacts (via C-terminus) with host EIF2AK2.

It localises to the virion. It is found in the host cytoplasm. The protein localises to the host nucleus. Functionally, acts as a transactivator along with IE2, and is required for oriLyt-dependent DNA replication in the transient transfection replication assay using native promoters. The chain is Protein IRS1 (IRS1) from Human cytomegalovirus (strain Merlin) (HHV-5).